Consider the following 187-residue polypeptide: Elongation factor P (187 aa).

It belongs to the elongation factor P family.

The protein resides in the cytoplasm. It participates in protein biosynthesis; polypeptide chain elongation. In terms of biological role, involved in peptide bond synthesis. Stimulates efficient translation and peptide-bond synthesis on native or reconstituted 70S ribosomes in vitro. Probably functions indirectly by altering the affinity of the ribosome for aminoacyl-tRNA, thus increasing their reactivity as acceptors for peptidyl transferase. The protein is Elongation factor P of Desulforapulum autotrophicum (strain ATCC 43914 / DSM 3382 / VKM B-1955 / HRM2) (Desulfobacterium autotrophicum).